Here is a 347-residue protein sequence, read N- to C-terminus: Ultraviolet-sensitive opsin (347 aa).

Over 1 to 37 the chain is Extracellular; the sequence is MSGEEEFYLFKNGSIGGPWDGPQYHIAPPWAFYLQTA. Asn-12 is a glycosylation site (N-linked (GlcNAc...) asparagine). The chain crosses the membrane as a helical span at residues 38–58; that stretch reads FMGFVFMVGTPLNAIVLVVTI. The Cytoplasmic segment spans residues 59–69; that stretch reads KYKKLRQPLNY. A helical membrane pass occupies residues 70–90; that stretch reads ILVNISFCGFLACIICIFTVF. Residues 91-106 lie on the Extracellular side of the membrane; that stretch reads VSSSQGYFVFGKHVCA. Cys-105 and Cys-182 are disulfide-bonded. The chain crosses the membrane as a helical span at residues 107 to 127; sequence FEGFMGATAGLVTGWSLAFLA. At 128-147 the chain is on the cytoplasmic side; that stretch reads FERYIVICKPLGNFRFTAKH. A helical transmembrane segment spans residues 148–168; it reads ALVVVVATWVIGIGVAIPPFF. At 169–197 the chain is on the extracellular side; that stretch reads GWSRYVPEGLQCSCGPDWYTVGTKYRSEY. Residues 198–218 form a helical membrane-spanning segment; that stretch reads YTWFLFIFCFIVPLSLIIFSY. The Cytoplasmic portion of the chain corresponds to 219–247; sequence SQLLSALRAVAAQQQESATTQKAEREVSR. Residues 248–268 form a helical membrane-spanning segment; that stretch reads MVVVMVGSFCVCYVPYAALAM. Residues 269–282 are Extracellular-facing; the sequence is YMVNNREHGIDLRL. A helical membrane pass occupies residues 283–303; it reads VTIPAFFSKSSCVYNPIIYCF. At Lys-291 the chain carries N6-(retinylidene)lysine. Residues 304-347 lie on the Cytoplasmic side of the membrane; the sequence is MNKQFRGCIMEMVCGKPMTDDSDMSSSAQRTEVSSVSSSQVSPS. A lipid anchor (S-palmitoyl cysteine) is attached at Cys-317. Residues 324–347 form a disordered region; the sequence is DSDMSSSAQRTEVSSVSSSQVSPS. Residues 328–347 are compositionally biased toward low complexity; sequence SSSAQRTEVSSVSSSQVSPS.

This sequence belongs to the G-protein coupled receptor 1 family. Opsin subfamily. Post-translationally, phosphorylated on some or all of the serine and threonine residues present in the C-terminal region. As to expression, cone photoreceptor cells.

Its subcellular location is the membrane. In terms of biological role, visual pigments are the light-absorbing molecules that mediate vision. They consist of an apoprotein, opsin, covalently linked to cis-retinal. This is Ultraviolet-sensitive opsin from Melopsittacus undulatus (Budgerigar).